Here is a 161-residue protein sequence, read N- to C-terminus: Transcriptional regulator MraZ (161 aa).

2 consecutive SpoVT-AbrB domains span residues 7 to 69 (KELH…EPDV) and 98 to 141 (LDVV…EPER).

It belongs to the MraZ family. As to quaternary structure, forms oligomers.

Its subcellular location is the cytoplasm. It localises to the nucleoid. This Chlorobium limicola (strain DSM 245 / NBRC 103803 / 6330) protein is Transcriptional regulator MraZ.